The following is a 378-amino-acid chain: Polar flagellin B/D (378 aa).

Coiled coils occupy residues 103 to 128 and 311 to 340; these read SNSKAERVAIQEEVTALNDELNRIAE and AFQNRFNHAISNLDNINENVNASKSRIKDT.

Belongs to the bacterial flagellin family. Heteromer of multiple flagellin subunits including FlaA, FlaB/D, FlaC, FlaE and FlaF.

It localises to the secreted. The protein resides in the bacterial flagellum. Functionally, flagellin is the subunit protein which polymerizes to form the filaments of bacterial flagella. FlaB/D is not essential for polar flagellar synthesis and swimming motility. Homomer of FlaB/D is not able to form a functional filament. The protein is Polar flagellin B/D (flaB) of Vibrio parahaemolyticus serotype O3:K6 (strain RIMD 2210633).